The following is a 660-amino-acid chain: Bifunctional polymyxin resistance protein ArnA (660 aa).

Positions 1 to 304 (MKTVVFAYHD…MLGLVQGSRL (304 aa)) are formyltransferase ArnAFT. Residue 86–88 (HLI) coordinates (6R)-10-formyltetrahydrofolate. The active-site Proton donor; for formyltransferase activity is H104. (6R)-10-formyltetrahydrofolate-binding positions include R114 and 136 to 140 (VKRAD). Positions 314-660 (RRTRVLILGV…RTVDLTDKPS (347 aa)) are dehydrogenase ArnADH. NAD(+) is bound by residues D347 and 368–369 (DI). UDP-alpha-D-glucuronate is bound by residues A393, Y398, and 432 to 433 (TS). E434 serves as the catalytic Proton acceptor; for decarboxylase activity. UDP-alpha-D-glucuronate-binding positions include R460, N492, 526–535 (KLIDGGKQKR), and Y613. R619 functions as the Proton donor; for decarboxylase activity in the catalytic mechanism.

It in the N-terminal section; belongs to the Fmt family. UDP-L-Ara4N formyltransferase subfamily. The protein in the C-terminal section; belongs to the NAD(P)-dependent epimerase/dehydratase family. UDP-glucuronic acid decarboxylase subfamily. In terms of assembly, homohexamer, formed by a dimer of trimers.

The catalysed reaction is UDP-alpha-D-glucuronate + NAD(+) = UDP-beta-L-threo-pentopyranos-4-ulose + CO2 + NADH. The enzyme catalyses UDP-4-amino-4-deoxy-beta-L-arabinose + (6R)-10-formyltetrahydrofolate = UDP-4-deoxy-4-formamido-beta-L-arabinose + (6S)-5,6,7,8-tetrahydrofolate + H(+). It functions in the pathway nucleotide-sugar biosynthesis; UDP-4-deoxy-4-formamido-beta-L-arabinose biosynthesis; UDP-4-deoxy-4-formamido-beta-L-arabinose from UDP-alpha-D-glucuronate: step 1/3. The protein operates within nucleotide-sugar biosynthesis; UDP-4-deoxy-4-formamido-beta-L-arabinose biosynthesis; UDP-4-deoxy-4-formamido-beta-L-arabinose from UDP-alpha-D-glucuronate: step 3/3. It participates in bacterial outer membrane biogenesis; lipopolysaccharide biosynthesis. Functionally, bifunctional enzyme that catalyzes the oxidative decarboxylation of UDP-glucuronic acid (UDP-GlcUA) to UDP-4-keto-arabinose (UDP-Ara4O) and the addition of a formyl group to UDP-4-amino-4-deoxy-L-arabinose (UDP-L-Ara4N) to form UDP-L-4-formamido-arabinose (UDP-L-Ara4FN). The modified arabinose is attached to lipid A and is required for resistance to polymyxin and cationic antimicrobial peptides. The protein is Bifunctional polymyxin resistance protein ArnA of Shigella flexneri serotype 5b (strain 8401).